The sequence spans 37 residues: Large ribosomal subunit protein bL36c (37 aa).

It belongs to the bacterial ribosomal protein bL36 family.

The protein localises to the plastid. This chain is Large ribosomal subunit protein bL36c, found in Cuscuta gronovii (Common dodder).